The sequence spans 511 residues: Zinc finger CCCH-type with G patch domain-containing protein (511 aa).

The segment at 157–180 (PCSYYLEGECRFDEARCRYSHGAL) adopts a C3H1-type zinc-finger fold. The tract at residues 254–281 (DQEDELTSEDSSSVNDGSSDEEESDMDD) is disordered. Acidic residues predominate over residues 271–281 (SSDEEESDMDD). A G-patch domain is found at 311-357 (TRGIGSKLMEKMGYIHGTGLGSDGRGIVTPVSAQILPKGRSLDACME). Disordered regions lie at residues 409–433 (GSDN…QHST) and 478–511 (MHNQ…MFEF). Residues 414–425 (QQAEPEAKKAKA) show a composition bias toward basic and acidic residues. A compositionally biased stretch (polar residues) spans 478–493 (MHNQKQELATLQAQER). The span at 494 to 511 (SLSKEQQTRKSKNKMFEF) shows a compositional bias: basic and acidic residues.

It is found in the nucleus. Its function is as follows. Transcription repressor. This chain is Zinc finger CCCH-type with G patch domain-containing protein, found in Drosophila ananassae (Fruit fly).